A 152-amino-acid polypeptide reads, in one-letter code: Phosphopantetheine adenylyltransferase (152 aa).

Position 9 (S9) interacts with substrate. ATP-binding positions include 9-10 (SF) and H17. K41, T73, and R87 together coordinate substrate. ATP-binding positions include 88 to 90 (GLR), E98, and 122 to 128 (TSFISSS).

The protein belongs to the bacterial CoaD family. As to quaternary structure, homohexamer. Mg(2+) serves as cofactor.

Its subcellular location is the cytoplasm. It carries out the reaction (R)-4'-phosphopantetheine + ATP + H(+) = 3'-dephospho-CoA + diphosphate. Its pathway is cofactor biosynthesis; coenzyme A biosynthesis; CoA from (R)-pantothenate: step 4/5. Its function is as follows. Reversibly transfers an adenylyl group from ATP to 4'-phosphopantetheine, yielding dephospho-CoA (dPCoA) and pyrophosphate. The chain is Phosphopantetheine adenylyltransferase from Flavobacterium johnsoniae (strain ATCC 17061 / DSM 2064 / JCM 8514 / BCRC 14874 / CCUG 350202 / NBRC 14942 / NCIMB 11054 / UW101) (Cytophaga johnsonae).